The chain runs to 26 residues: Beta-hexosaminidase (26 aa).

Post-translationally, glycosylated. Detected in dry seeds and cotyledons.

The catalysed reaction is Hydrolysis of terminal non-reducing N-acetyl-D-hexosamine residues in N-acetyl-beta-D-hexosaminides.. With respect to regulation, inhibited by AgNO(3) at a concentration of 0.1 mM. Strongly inhibited by CdCl(2), ZnCl(2) and FeCl(3) and moderately by CoCl(2), CuSO(4) and NiCl(2) at 10 mM concentration. CaCl(2), MgCl(2), MnSO(4) and KI also have a slight inhibitory effect of 20%-25% at 10 mM concentration. Activated to a small extent by MgCl(2) at 0.1 mM concentration but inhibited with increasing concentration. Not affected by carbohydrates such as fucose, galactose and glucose but displays a slight decrease in activity up to 25% with lactose, alpha-mannose and N-acetyl-galactosamine (GalNAc). Has hexosaminidase activity. Active with both p-nitrophenyl-beta-D-N-acetylglucosamine (pNP-GlcNAc) and p-nitrophenyl-beta-D-N-acetylgalactosamine (pNP-GalNAc). Not active toward p-nitrophenyl-beta-D-N,N'-diacetylchitobiose (pNP-(GlcNAc)2) or p-nitrophenyl-beta-D-N,N',N''-triacetylchitobiose (pNP-(GlcNAc)3). Removes terminal GlcNAc and may be involved in storage protein degradation. This is Beta-hexosaminidase from Lupinus albus (White lupine).